A 537-amino-acid polypeptide reads, in one-letter code: Cytochrome P450 monooxygenase AOL_s00215g282 (537 aa).

The chain crosses the membrane as a helical span at residues 9–29 (ATVVLCGSIVTVSIAYVIFVV). N-linked (GlcNAc...) asparagine glycosylation is present at asparagine 126. Cysteine 451 lines the heme pocket.

This sequence belongs to the cytochrome P450 family. Requires heme as cofactor.

Its subcellular location is the membrane. It participates in secondary metabolite biosynthesis; terpenoid biosynthesis. Cytochrome P450 monooxygenase; part of the gene cluster that mediates the biosynthesis of sesquiterpenyl epoxy-cyclohexenoids (SECs) such as anthrobotrisins and arthrosporols, metabolites that possess a novel hybrid carbon skeleton consisting of a polyketide-derived epoxycyclohexenol combined with a terpenoid-derived monocyclic sesquiterpenol substructure (PKS-PTS hybrid). The SEC pathway plays an important role for fungal soil colonization via decreasing fungal nematode-capturing ability. Within the pathway, the cytochrome P450 monooxygenase AOL_s00215g282 acts as a m-cresol hydrolase that converts m-cresol to toluquinol. The pathway begins with the biosynthesis of 6-methylsalicylic acid (6-MSA), the first precursor of the polyketide-derived epoxycyclohexenol in arthrosporols, by the polyketide synthase (PKS) AOL_s00215g283 via condensation of 1 acetate and 3 malonate units. The 6-methylsalicylic acid decarboxylase AOL_s00215g281 then catalyzes the decarboxylation of 6-methylsalicylic acid to yield m-cresol. The cytochrome P450 monooxygenase AOL_s00215g282 further oxidizes m-cresol to yield toluquinol. With the assistance of the oxidoreductase AOL_s00215g277, the polyprenyl transferase AOL_s00215g276 catalyzes the farnesylation of toluquinol to produce farnesyl hydroquinone, the hybrid precursor for biosynthesis of SECs. Farnesyl hydroquinone undergoes epoxidation and then subsequent dehydrogenation to form farnesyl epoxy-quinone, the first and simplest SEC. The cytochrome P450 monooxygenase AOL_s00215g278 and the FAD-dependent monooxygenase AOL_s00215g279 might be involved in the oxygenation of the phenol moiety, most likely in the epoxy formation. The cytochrome P450 monooxygenases AOL_s00215g274 and AOL_s00215g280 are involved in specific regional ketone reductions at respectively C-4 and C-1 of farnesyl epoxy-quinone PubMed:33823587. This Arthrobotrys oligospora (strain ATCC 24927 / CBS 115.81 / DSM 1491) (Nematode-trapping fungus) protein is Cytochrome P450 monooxygenase AOL_s00215g282.